A 156-amino-acid chain; its full sequence is Putative pre-16S rRNA nuclease (156 aa).

It belongs to the YqgF nuclease family.

It is found in the cytoplasm. In terms of biological role, could be a nuclease involved in processing of the 5'-end of pre-16S rRNA. This Aromatoleum aromaticum (strain DSM 19018 / LMG 30748 / EbN1) (Azoarcus sp. (strain EbN1)) protein is Putative pre-16S rRNA nuclease.